Reading from the N-terminus, the 762-residue chain is Multifunctional tryptophan biosynthesis protein (762 aa).

The region spanning 25-224 (NLILIDNYDS…LHMQGGTWAE (200 aa)) is the Glutamine amidotransferase type-1 domain. Residue 76-78 (GPG) coordinates L-glutamine. Cysteine 104 (nucleophile; for GATase activity) is an active-site residue. Residues glutamine 108 and 154–155 (SL) contribute to the L-glutamine site. Residues histidine 198 and glutamate 200 each act as for GATase activity in the active site. The tract at residues 251 to 515 (ILQKIYAHRK…DATQFIRELC (265 aa)) is indole-3-glycerol phosphate synthase. The N-(5'-phosphoribosyl)anthranilate isomerase stretch occupies residues 531 to 762 (LVKICGTRSA…EFVKAAKSVR (232 aa)).

In terms of assembly, tetramer of two components I and two components II.

The enzyme catalyses chorismate + L-glutamine = anthranilate + pyruvate + L-glutamate + H(+). It catalyses the reaction N-(5-phospho-beta-D-ribosyl)anthranilate = 1-(2-carboxyphenylamino)-1-deoxy-D-ribulose 5-phosphate. The catalysed reaction is 1-(2-carboxyphenylamino)-1-deoxy-D-ribulose 5-phosphate + H(+) = (1S,2R)-1-C-(indol-3-yl)glycerol 3-phosphate + CO2 + H2O. It functions in the pathway amino-acid biosynthesis; L-tryptophan biosynthesis; L-tryptophan from chorismate: step 1/5. The protein operates within amino-acid biosynthesis; L-tryptophan biosynthesis; L-tryptophan from chorismate: step 3/5. Its pathway is amino-acid biosynthesis; L-tryptophan biosynthesis; L-tryptophan from chorismate: step 4/5. Its function is as follows. Trifunctional enzyme bearing the Gln amidotransferase (GATase) domain of anthranilate synthase, indole-glycerolphosphate synthase, and phosphoribosylanthranilate isomerase activities. This is Multifunctional tryptophan biosynthesis protein (trp-1) from Neurospora crassa (strain ATCC 24698 / 74-OR23-1A / CBS 708.71 / DSM 1257 / FGSC 987).